Here is a 130-residue protein sequence, read N- to C-terminus: Small ribosomal subunit protein uS11 (130 aa).

It belongs to the universal ribosomal protein uS11 family. Part of the 30S ribosomal subunit. Interacts with proteins S7 and S18. Binds to IF-3.

Functionally, located on the platform of the 30S subunit, it bridges several disparate RNA helices of the 16S rRNA. Forms part of the Shine-Dalgarno cleft in the 70S ribosome. This Aliarcobacter butzleri (strain RM4018) (Arcobacter butzleri) protein is Small ribosomal subunit protein uS11.